Here is a 291-residue protein sequence, read N- to C-terminus: NADH-cytochrome b5 reductase 2 (291 aa).

A helical membrane pass occupies residues 7–23; it reads PIAATSVVAAAASSYYF. The 105-residue stretch at 41–145 folds into the FAD-binding FR-type domain; that stretch reads DQWVDLKLKS…KGPIIKYQWQ (105 aa). FAD is bound at residue 148 to 183; that stretch reads LHKEITLIGAGTGITPLYQLISAINKNPEDKTKVNL.

This sequence belongs to the flavoprotein pyridine nucleotide cytochrome reductase family. The cofactor is FAD.

The protein resides in the mitochondrion outer membrane. The catalysed reaction is 2 Fe(III)-[cytochrome b5] + NADH = 2 Fe(II)-[cytochrome b5] + NAD(+) + H(+). Its function is as follows. May mediate the reduction of outer membrane cytochrome b5. This chain is NADH-cytochrome b5 reductase 2 (MCR1), found in Yarrowia lipolytica (strain CLIB 122 / E 150) (Yeast).